Here is an 894-residue protein sequence, read N- to C-terminus: Protein translocase subunit SecA (894 aa).

ATP-binding positions include Q87, 105–109, and D512; that span reads GEGKT. Residues 836–870 are disordered; sequence EVEQAERERQAHAEQESSHYHAEGEGQDFSDLHIG. Zn(2+) contacts are provided by C875, C877, C886, and H887.

The protein belongs to the SecA family. In terms of assembly, monomer and homodimer. Part of the essential Sec protein translocation apparatus which comprises SecA, SecYEG and auxiliary proteins SecDF-YajC and YidC. Requires Zn(2+) as cofactor.

It is found in the cell inner membrane. The protein resides in the cytoplasm. It catalyses the reaction ATP + H2O + cellular proteinSide 1 = ADP + phosphate + cellular proteinSide 2.. Functionally, part of the Sec protein translocase complex. Interacts with the SecYEG preprotein conducting channel. Has a central role in coupling the hydrolysis of ATP to the transfer of proteins into and across the cell membrane, serving both as a receptor for the preprotein-SecB complex and as an ATP-driven molecular motor driving the stepwise translocation of polypeptide chains across the membrane. The chain is Protein translocase subunit SecA from Glaesserella parasuis serovar 5 (strain SH0165) (Haemophilus parasuis).